A 329-amino-acid polypeptide reads, in one-letter code: Glucokinase (329 aa).

13 to 18 (GDIGGT) provides a ligand contact to ATP.

This sequence belongs to the bacterial glucokinase family.

The protein resides in the cytoplasm. It carries out the reaction D-glucose + ATP = D-glucose 6-phosphate + ADP + H(+). The sequence is that of Glucokinase from Caulobacter sp. (strain K31).